The following is a 328-amino-acid chain: Phosphate acyltransferase (328 aa).

It belongs to the PlsX family. In terms of assembly, homodimer. Probably interacts with PlsY.

It is found in the cytoplasm. It carries out the reaction a fatty acyl-[ACP] + phosphate = an acyl phosphate + holo-[ACP]. It participates in lipid metabolism; phospholipid metabolism. Its function is as follows. Catalyzes the reversible formation of acyl-phosphate (acyl-PO(4)) from acyl-[acyl-carrier-protein] (acyl-ACP). This enzyme utilizes acyl-ACP as fatty acyl donor, but not acyl-CoA. This is Phosphate acyltransferase from Campylobacter jejuni subsp. jejuni serotype O:6 (strain 81116 / NCTC 11828).